The primary structure comprises 518 residues: Glutamate--cysteine ligase (518 aa).

Belongs to the glutamate--cysteine ligase type 1 family. Type 1 subfamily.

It carries out the reaction L-cysteine + L-glutamate + ATP = gamma-L-glutamyl-L-cysteine + ADP + phosphate + H(+). The protein operates within sulfur metabolism; glutathione biosynthesis; glutathione from L-cysteine and L-glutamate: step 1/2. This chain is Glutamate--cysteine ligase, found in Shigella sonnei (strain Ss046).